The primary structure comprises 184 residues: Glutathione-regulated potassium-efflux system ancillary protein KefG (184 aa).

It belongs to the NAD(P)H dehydrogenase (quinone) family. KefG subfamily. Interacts with KefB.

The protein localises to the cell inner membrane. It catalyses the reaction a quinone + NADH + H(+) = a quinol + NAD(+). The enzyme catalyses a quinone + NADPH + H(+) = a quinol + NADP(+). Functionally, regulatory subunit of a potassium efflux system that confers protection against electrophiles. Required for full activity of KefB. In Shigella dysenteriae serotype 1 (strain Sd197), this protein is Glutathione-regulated potassium-efflux system ancillary protein KefG.